Consider the following 626-residue polypeptide: Phosphomethylpyrimidine synthase (626 aa).

The interval 1–27 (MSKQEKAISLSESAQVDQQSVQPLPNS) is disordered. Positions 10–25 (LSESAQVDQQSVQPLP) are enriched in polar residues. Residues asparagine 232, methionine 261, tyrosine 290, histidine 326, 346-348 (SRG), 387-390 (DGLR), and glutamate 426 contribute to the substrate site. Histidine 430 provides a ligand contact to Zn(2+). Tyrosine 453 is a substrate binding site. Histidine 494 provides a ligand contact to Zn(2+). Residues cysteine 574, cysteine 577, and cysteine 582 each contribute to the [4Fe-4S] cluster site.

This sequence belongs to the ThiC family. Homodimer. The cofactor is [4Fe-4S] cluster.

It carries out the reaction 5-amino-1-(5-phospho-beta-D-ribosyl)imidazole + S-adenosyl-L-methionine = 4-amino-2-methyl-5-(phosphooxymethyl)pyrimidine + CO + 5'-deoxyadenosine + formate + L-methionine + 3 H(+). Its pathway is cofactor biosynthesis; thiamine diphosphate biosynthesis. In terms of biological role, catalyzes the synthesis of the hydroxymethylpyrimidine phosphate (HMP-P) moiety of thiamine from aminoimidazole ribotide (AIR) in a radical S-adenosyl-L-methionine (SAM)-dependent reaction. This is Phosphomethylpyrimidine synthase from Pseudomonas entomophila (strain L48).